Consider the following 78-residue polypeptide: Structural DNA-binding protein p10 (78 aa).

The segment covering 1–27 (MPTKAGTKSTANKKTTKGSSKSGSSRG) has biased composition (low complexity). The disordered stretch occupies residues 1 to 41 (MPTKAGTKSTANKKTTKGSSKSGSSRGHTGKTHASSSMHSG).

The protein belongs to the asfivirus P10 family.

It localises to the virion. Its function is as follows. May play a role in genome packaging through direct interaction with viral DNA. Binds to ssDNA and dsDNA with the same apparent affinity in vitro. This chain is Structural DNA-binding protein p10, found in African swine fever virus (strain Badajoz 1971 Vero-adapted) (Ba71V).